The sequence spans 295 residues: RNA polymerase sigma factor RpoH (295 aa).

Positions 52-121 (MVTSHLRLVA…IQEYILRSWS (70 aa)) are sigma-70 factor domain-2. An Interaction with polymerase core subunit RpoC motif is present at residues 76–79 (EVIS). The interval 230-281 (AMVELTDRERHILTERRLKDDPTTLEELAAQYGVSRERVRQIEVRAFEKLQK) is sigma-70 factor domain-4. Positions 254-273 (LEELAAQYGVSRERVRQIEV) form a DNA-binding region, H-T-H motif.

It belongs to the sigma-70 factor family. RpoH subfamily. As to quaternary structure, interacts with the RNA polymerase core enzyme.

The protein resides in the cytoplasm. Its function is as follows. Sigma factors are initiation factors that promote the attachment of RNA polymerase to specific initiation sites and are then released. This sigma factor is involved in regulation of expression of heat shock genes. This chain is RNA polymerase sigma factor RpoH, found in Caulobacter vibrioides (strain ATCC 19089 / CIP 103742 / CB 15) (Caulobacter crescentus).